Reading from the N-terminus, the 113-residue chain is RING-box protein 2 (113 aa).

Residues Met-1 to Gly-26 form a disordered region. Ala-2 is subject to N-acetylalanine. At Thr-10 the chain carries Phosphothreonine; by CK2. Zn(2+) is bound by residues Cys-50, Cys-53, Cys-61, Cys-64, Cys-73, Cys-80, His-82, His-85, Cys-87, Cys-88, Cys-99, and Cys-102. An RING-type zinc finger spans residues Cys-61–Gln-103.

It belongs to the RING-box family. As to quaternary structure, catalytic component of multiple cullin-5-RING E3 ubiquitin-protein ligase complexes (ECS complexes, also named CRL5 complexes) composed of CUL5, Elongin BC (ELOB and ELOC), RNF7/RBX2 and a variable SOCS box domain-containing protein as substrate-specific recognition component. Also interacts (with lower preference) with CUL1, CUL2, CUL3, CUL4A and CUL4B; additional evidence is however required to confirm this result in vivo. Interacts with UBE2F. Interacts with CSNK2B, the interaction is not affected by phosphorylation by CK2. May also interact with DCUN1D1, DCUN1D2, DCUN1D3, DCUN1D4 and DCUN1D5. (Microbial infection) Following infection by HIV-1 virus, component of a cullin-5-RING E3 ubiquitin-protein ligase complex (ECS complex) hijacked by the HIV-1 Vif protein. In terms of processing, phosphorylation at Thr-10 by CK2 promotes its degradation by the proteasome. In terms of tissue distribution, expressed in heart, liver, skeletal muscle and pancreas. At very low levels expressed in brain, placenta and lung.

It localises to the cytoplasm. Its subcellular location is the nucleus. The catalysed reaction is S-ubiquitinyl-[E2 ubiquitin-conjugating enzyme]-L-cysteine + [acceptor protein]-L-lysine = [E2 ubiquitin-conjugating enzyme]-L-cysteine + N(6)-ubiquitinyl-[acceptor protein]-L-lysine.. The enzyme catalyses S-[NEDD8-protein]-yl-[E2 NEDD8-conjugating enzyme]-L-cysteine + [cullin]-L-lysine = [E2 NEDD8-conjugating enzyme]-L-cysteine + N(6)-[NEDD8-protein]-yl-[cullin]-L-lysine.. It functions in the pathway protein modification; protein ubiquitination. Its pathway is protein modification; protein neddylation. Its function is as follows. Catalytic component of multiple cullin-5-RING E3 ubiquitin-protein ligase complexes (ECS complexes), which mediate the ubiquitination and subsequent proteasomal degradation of target proteins. It is thereby involved in various biological processes, such as cell cycle progression, signal transduction and transcription. The functional specificity of the E3 ubiquitin-protein ligase ECS complexes depend on the variable SOCS box-containing substrate recognition component. Within ECS complexes, RNF7/RBX2 recruits the E2 ubiquitination enzyme to the complex via its RING-type and brings it into close proximity to the substrate. Catalytic subunit of various SOCS-containing ECS complexes, such as the ECS(SOCS7) complex, that regulate reelin signaling by mediating ubiquitination and degradation of DAB1. The ECS(SOCS2) complex mediates the ubiquitination and subsequent proteasomal degradation of phosphorylated EPOR and GHR. Promotes ubiquitination and degradation of NF1, thereby regulating Ras protein signal transduction. As part of the ECS(ASB9) complex, catalyzes ubiquitination and degradation of CKB. The ECS(SPSB3) complex catalyzes ubiquitination of nuclear CGAS. As part of the ECS(RAB40C) complex, mediates ANKRD28 ubiquitination and degradation, thereby inhibiting protein phosphatase 6 (PP6) complex activity and focal adhesion assembly during cell migration. As part of some ECS complex, catalyzes 'Lys-11'-linked ubiquitination and degradation of BTRC. ECS complexes and ARIH2 collaborate in tandem to mediate ubiquitination of target proteins; ARIH2 mediating addition of the first ubiquitin on CRLs targets. Specifically catalyzes the neddylation of CUL5 via its interaction with UBE2F. Does not catalyze neddylation of other cullins (CUL1, CUL2, CUL3, CUL4A or CUL4B). May play a role in protecting cells from apoptosis induced by redox agents. In terms of biological role, inactive. Functionally, (Microbial infection) Following infection by HIV-1 virus, catalytic component of a cullin-5-RING E3 ubiquitin-protein ligase complex (ECS complex) hijacked by the HIV-1 Vif protein, which catalyzes ubiquitination and degradation of APOBEC3F and APOBEC3G. The protein is RING-box protein 2 of Homo sapiens (Human).